Reading from the N-terminus, the 392-residue chain is L-rhamnonate dehydratase (392 aa).

Substrate is bound by residues histidine 22 and arginine 48. 3 residues coordinate Mg(2+): aspartate 214, glutamate 240, and glutamate 268. The active-site Proton acceptor is the histidine 318. Substrate is bound at residue glutamate 338.

Belongs to the mandelate racemase/muconate lactonizing enzyme family. RhamD subfamily. In terms of assembly, homooctamer; tetramer of dimers. Mg(2+) is required as a cofactor.

It catalyses the reaction L-rhamnonate = 2-dehydro-3-deoxy-L-rhamnonate + H2O. In terms of biological role, catalyzes the dehydration of L-rhamnonate to 2-keto-3-deoxy-L-rhamnonate (KDR). This is L-rhamnonate dehydratase from Burkholderia ambifaria (strain ATCC BAA-244 / DSM 16087 / CCUG 44356 / LMG 19182 / AMMD) (Burkholderia cepacia (strain AMMD)).